A 181-amino-acid chain; its full sequence is Oligoribonuclease (181 aa).

An Exonuclease domain is found at 8-171 (LIWIDLEMTG…DDIRESVAEL (164 aa)). The active site involves Tyr-129.

Belongs to the oligoribonuclease family.

The protein localises to the cytoplasm. 3'-to-5' exoribonuclease specific for small oligoribonucleotides. The chain is Oligoribonuclease from Yersinia pseudotuberculosis serotype O:1b (strain IP 31758).